The primary structure comprises 257 residues: 3-deoxy-manno-octulosonate cytidylyltransferase (257 aa).

The protein belongs to the KdsB family.

It is found in the cytoplasm. The catalysed reaction is 3-deoxy-alpha-D-manno-oct-2-ulosonate + CTP = CMP-3-deoxy-beta-D-manno-octulosonate + diphosphate. Its pathway is nucleotide-sugar biosynthesis; CMP-3-deoxy-D-manno-octulosonate biosynthesis; CMP-3-deoxy-D-manno-octulosonate from 3-deoxy-D-manno-octulosonate and CTP: step 1/1. The protein operates within bacterial outer membrane biogenesis; lipopolysaccharide biosynthesis. Activates KDO (a required 8-carbon sugar) for incorporation into bacterial lipopolysaccharide in Gram-negative bacteria. The polypeptide is 3-deoxy-manno-octulosonate cytidylyltransferase (Rhodospirillum centenum (strain ATCC 51521 / SW)).